The chain runs to 288 residues: 4-diphosphocytidyl-2-C-methyl-D-erythritol kinase (288 aa).

Residue lysine 13 is part of the active site. 96-106 lines the ATP pocket; it reads PMGGGIGGGSS. The active site involves aspartate 138.

This sequence belongs to the GHMP kinase family. IspE subfamily.

The catalysed reaction is 4-CDP-2-C-methyl-D-erythritol + ATP = 4-CDP-2-C-methyl-D-erythritol 2-phosphate + ADP + H(+). It functions in the pathway isoprenoid biosynthesis; isopentenyl diphosphate biosynthesis via DXP pathway; isopentenyl diphosphate from 1-deoxy-D-xylulose 5-phosphate: step 3/6. Functionally, catalyzes the phosphorylation of the position 2 hydroxy group of 4-diphosphocytidyl-2C-methyl-D-erythritol. The protein is 4-diphosphocytidyl-2-C-methyl-D-erythritol kinase of Aliivibrio fischeri (strain MJ11) (Vibrio fischeri).